The following is a 151-amino-acid chain: MSKPSSCKAYLGIDYGKKRIGLAYAAEPLLLTLPIGNIEAGKNLKLSAEALHKIILSRNITCVVLGNPLPMQKGLYSSLQEEVSLLAEELKKLSTVEIILWDERLSSVQAERMLKQDCGLSRKDRKGKTDSLAATLILTSFLDSLPKKLTL.

Belongs to the YqgF nuclease family.

Its subcellular location is the cytoplasm. Its function is as follows. Could be a nuclease involved in processing of the 5'-end of pre-16S rRNA. The protein is Putative pre-16S rRNA nuclease of Chlamydia pneumoniae (Chlamydophila pneumoniae).